Reading from the N-terminus, the 370-residue chain is tRNA-specific 2-thiouridylase MnmA (370 aa).

ATP is bound by residues 7 to 14 and Met-34; that span reads ALSGGVDS. The interval 104-106 is interaction with target base in tRNA; that stretch reads NPD. The active-site Nucleophile is the Cys-109. Cys-109 and Cys-202 are joined by a disulfide. Position 134 (Gly-134) interacts with ATP. The interaction with tRNA stretch occupies residues 152–154; the sequence is KDQ. Residue Cys-202 is the Cysteine persulfide intermediate of the active site. Positions 308-309 are interaction with tRNA; the sequence is RY.

The protein belongs to the MnmA/TRMU family.

It is found in the cytoplasm. It carries out the reaction S-sulfanyl-L-cysteinyl-[protein] + uridine(34) in tRNA + AH2 + ATP = 2-thiouridine(34) in tRNA + L-cysteinyl-[protein] + A + AMP + diphosphate + H(+). In terms of biological role, catalyzes the 2-thiolation of uridine at the wobble position (U34) of tRNA, leading to the formation of s(2)U34. This chain is tRNA-specific 2-thiouridylase MnmA, found in Mycoplasma mobile (strain ATCC 43663 / 163K / NCTC 11711) (Mesomycoplasma mobile).